Here is a 254-residue protein sequence, read N- to C-terminus: Membrane protein US20 (254 aa).

The next 7 helical transmembrane spans lie at 31-51, 62-82, 89-109, 114-134, 143-163, 178-198, and 208-228; these read AIFIFQLAFSFGLGSVFWLGF, YSFFLTVLVPIVCMFITYTLG, ATVLFIYLLANSLTAAIFQMC, VLVGSYVMTLALFISFTGLAF, WKCISCVYVVMLLSFLTLALL, AFSISFFLGILAYDSLMVIFF, and AVCLYLDSMAIFLTLLLMLSG.

The protein resides in the host membrane. The polypeptide is Membrane protein US20 (US20) (Homo sapiens (Human)).